Reading from the N-terminus, the 711-residue chain is MKFFASCAKGLEYLLADELLALGASKATATISGVNVEGALRDAQRAVLWSRLASRVLWPLTEFDCPDEDALYAGVAELPWHEHLSTGHTLSVDAHVSGTAITHARYAAQRIKDAVVDTIRRQGLERPSVDVESPDLRLNLSLRKGRATISVDLGGGPLHRRGWRMAQNEAPLKENLAAAVLLRAGWPRAYADGGGLLDPMCGSGTLLIEGALMAADVAPGLQRYGSDIPSRWRGFDRDSWQQLVTEARERDSVGRAALKQVIHGSDMDPHAIRAAKENAQVAGVAEAIWFGVREVGDLQTRPQATGVVVCNPPYDERLAADAALYRKLGDTLQRVVPQWRASLLCGNAELAYATGLRAGKKYQLFNGAIECALIVCDPIAVPRRTPLAAPTALSEGAQMVANRLRKNLQKFKKWRAREGIECFRVYDADLPEYSAAIDVYQQADGDRRIFLHVQEYAAPATIPEADVRRRLGELLAAAREVFEVPAERVALKSRERGKGGSKYGRFEQRNEIVNVREHGALLRVNLFDYLDTGLFLDHRPLRGTMAQQSKGRRFLNLFCYTGVASVQAAVAGASATTSVDLSGTYLQWCADNLALNGQAGSKHKLVQADALAWLEAERAHFDVIFCDPPTFSNSARAEDFDIQREHVRLLRAAVARLAPGGVLYFSNNFRRFKLDEEAVAEFAQCEEISPRTIDPDFERHVRIHRAWRLTA.

Positions 42–153 constitute a THUMP domain; sequence DAQRAVLWSR…KGRATISVDL (112 aa).

This sequence belongs to the methyltransferase superfamily. RlmKL family.

It localises to the cytoplasm. The enzyme catalyses guanosine(2445) in 23S rRNA + S-adenosyl-L-methionine = N(2)-methylguanosine(2445) in 23S rRNA + S-adenosyl-L-homocysteine + H(+). It catalyses the reaction guanosine(2069) in 23S rRNA + S-adenosyl-L-methionine = N(2)-methylguanosine(2069) in 23S rRNA + S-adenosyl-L-homocysteine + H(+). Specifically methylates the guanine in position 2445 (m2G2445) and the guanine in position 2069 (m7G2069) of 23S rRNA. This Xanthomonas campestris pv. campestris (strain B100) protein is Ribosomal RNA large subunit methyltransferase K/L.